The following is a 256-amino-acid chain: Thiazole synthase (256 aa).

Lys98 (schiff-base intermediate with DXP) is an active-site residue. Residues Gly159, Ala185–Gly186, and Asn207–Thr208 each bind 1-deoxy-D-xylulose 5-phosphate.

This sequence belongs to the ThiG family. In terms of assembly, homotetramer. Forms heterodimers with either ThiH or ThiS.

The protein resides in the cytoplasm. It carries out the reaction [ThiS sulfur-carrier protein]-C-terminal-Gly-aminoethanethioate + 2-iminoacetate + 1-deoxy-D-xylulose 5-phosphate = [ThiS sulfur-carrier protein]-C-terminal Gly-Gly + 2-[(2R,5Z)-2-carboxy-4-methylthiazol-5(2H)-ylidene]ethyl phosphate + 2 H2O + H(+). The protein operates within cofactor biosynthesis; thiamine diphosphate biosynthesis. In terms of biological role, catalyzes the rearrangement of 1-deoxy-D-xylulose 5-phosphate (DXP) to produce the thiazole phosphate moiety of thiamine. Sulfur is provided by the thiocarboxylate moiety of the carrier protein ThiS. In vitro, sulfur can be provided by H(2)S. This chain is Thiazole synthase (thiG), found in Bacillus subtilis (strain 168).